The primary structure comprises 428 residues: Methyl-branched lipid omega-hydroxylase (428 aa).

Cysteine 379 serves as a coordination point for heme.

It belongs to the cytochrome P450 family. Requires heme as cofactor.

It carries out the reaction a methyl-branched lipid + O2 + 2 reduced ferredoxin [iron-sulfur] cluster + 2 H(+) = an omega-hydroxy-methyl-branched lipid + H2O + 2 oxidized ferredoxin [iron-sulfur] cluster.. It catalyses the reaction cholest-4-en-3-one + 6 reduced [2Fe-2S]-[ferredoxin] + 3 O2 + 5 H(+) = (25R)-3-oxocholest-4-en-26-oate + 6 oxidized [2Fe-2S]-[ferredoxin] + 4 H2O. It functions in the pathway lipid metabolism; branched-chain fatty acid metabolism. Functionally, primarily hydroxylates the omega-carbon of a number of methyl-branched lipids, including (2E,6E)-farnesol, phytanate, geranylgeraniol, 15-methylpalmitate and (2E,6E)-farnesyl diphosphate. Also catalyzes the sequential oxidation of the terminal methyl of cholest-4-en-3-one into (25R)-26-hydroxycholest-4-en-3-one (alcohol), (25R)-26-oxocholest-4-en-3-one (aldehyde), to finally yield the carboxylic acid (25R)-3-oxocholest-4-en-26-oate. Also able to sequentially oxidize cholesterol itself, not only cholest-4-en-3-one. This is Methyl-branched lipid omega-hydroxylase (cyp124) from Mycobacterium tuberculosis (strain CDC 1551 / Oshkosh).